The chain runs to 851 residues: MQSNRRDFLKAQALAASAAAAGIPIVVEAANGTAAPKTAADVAVRWDKAPCRFCGTGCAVMVGVQEGKVVATQGDPEAPVNRGLNCIKGYFLSKIMYGRDRLQTPLLRKKNGVYDKEGDFVPVSWDEAFDIMAAKWKETLKTDGPTGIGMFGSGQWTVWEGYAAAKLWKAGFRSNNLDPNARHCMASAVTGFMRTFGIDEPMGCYDDIEQSDAFVLWGSNMAEMHPILWSRITDRRLSNPHVKVAVLSTYEHRSFDLADQAMIFKPQTDLAILNYIANYIITNKKVNTEFVKKNINFKKGATDIGYGLRPGHALEKDATSNGYPGADGKPKGNPNDSTPISFDEYAKFVSEYTAEKVSEISGVTVEQLKALAELYADPKVKVVSYWTMGFNQHTRGTWANNMVYNIHLLTGKISQPGNGPFSLTGQPSACGTAREVGTFAHRLPADMVVTNPEHRHHAEEIWGLPEGTIPDKIGLHAVAQSRALKDGKLKCYWVTTNNNMQAGPNINGEILPGWRNPKTFIVVSDPYPTASAMAADLVLPAAMWVEKEGAFGNAERRTQVWRQQVSAPGEARSDLWQMMEFSKRFKIEDVWTAELIAKKPAVKGKTLFDVLFRNGKVDKYPLADLTKVNAKYIKDYTNDESKAYGFYVQKGLFEEYAEFGRGHGHDLAPFDVYHEVRGLRWPVVDGKETLWRFREGYDPYVKKGEGVKFYGHKDGRANIFALPYQPAAESPDKEYDLWLCTGRVLEHWHTGTMTRRVPELHRAVPEAQLFMHPDDAKARGLQRGMKVKIASRRGEILLAVETKGRNKVPRGLVFVPFFDEGKLINKLTLDATCPISKETDFKKCAVKVVRA.

The tat-type signal signal peptide spans 1–29 (MQSNRRDFLKAQALAASAAAAGIPIVVEA). The region spanning 44–100 (VRWDKAPCRFCGTGCAVMVGVQEGKVVATQGDPEAPVNRGLNCIKGYFLSKIMYGRD) is the 4Fe-4S Mo/W bis-MGD-type domain. C51, C54, C58, and C86 together coordinate [4Fe-4S] cluster. Mo-bis(molybdopterin guanine dinucleotide)-binding positions include K88, Q155, N180, C184, 217–224 (WGSNMAEM), 248–252 (STYEH), and 267–269 (QTD). The tract at residues 317 to 338 (DATSNGYPGADGKPKGNPNDST) is disordered. Mo-bis(molybdopterin guanine dinucleotide) contacts are provided by residues M388, Q392, N498, 524-525 (SD), K547, D574, and 741-750 (TGRVLEHWHT). F817 serves as a coordination point for substrate. Residues N825 and K842 each contribute to the Mo-bis(molybdopterin guanine dinucleotide) site.

The protein belongs to the prokaryotic molybdopterin-containing oxidoreductase family. NasA/NapA/NarB subfamily. In terms of assembly, component of the periplasmic nitrate reductase NapAB complex composed of NapA and NapB. The cofactor is [4Fe-4S] cluster. It depends on Mo-bis(molybdopterin guanine dinucleotide) as a cofactor. Predicted to be exported by the Tat system. The position of the signal peptide cleavage has not been experimentally proven.

Its subcellular location is the periplasm. It catalyses the reaction 2 Fe(II)-[cytochrome] + nitrate + 2 H(+) = 2 Fe(III)-[cytochrome] + nitrite + H2O. Functionally, catalytic subunit of the periplasmic nitrate reductase complex NapAB. Receives electrons from NapB and catalyzes the reduction of nitrate to nitrite. The chain is Periplasmic nitrate reductase from Leptothrix cholodnii (strain ATCC 51168 / LMG 8142 / SP-6) (Leptothrix discophora (strain SP-6)).